The following is a 311-amino-acid chain: Olfactory receptor 5L1 (311 aa).

Over 1 to 25 the chain is Extracellular; sequence MGKENCTTVAEFILLGLSDVPELRV. Asn-5 carries an N-linked (GlcNAc...) asparagine glycan. Residues 26 to 46 form a helical membrane-spanning segment; that stretch reads CLFLLFLLIYGVTLLANLGMI. Topologically, residues 47–54 are cytoplasmic; that stretch reads ALIQVSSR. A helical transmembrane segment spans residues 55–75; the sequence is LHTPMYFFLSHLSSVDFCYSS. Residues 76 to 99 lie on the Extracellular side of the membrane; the sequence is IIVPKMLANIFNKDKAISFLGCMV. Cys-97 and Cys-189 are oxidised to a cystine. A helical transmembrane segment spans residues 100–120; sequence QFYLFCTCVVTEVFLLAVMAY. Residues 121 to 139 lie on the Cytoplasmic side of the membrane; it reads DRFVAICNPLLYTVTMSWK. The helical transmembrane segment at 140-160 threads the bilayer; sequence VRVELASCCYFCGTVCSLIHL. Residues 161–196 lie on the Extracellular side of the membrane; the sequence is CLALRIPFYRSNVINHFFCDLPPVLSLACSDITVNE. Asn-195 is a glycosylation site (N-linked (GlcNAc...) asparagine). A helical transmembrane segment spans residues 197–217; it reads TLLFLVATLNESVTIMIILTS. Over 218–237 the chain is Cytoplasmic; it reads YLLILTTILKMGSAEGRHKA. Residues 238–258 traverse the membrane as a helical segment; that stretch reads FSTCASHLTAITVFHGTVLSI. Topologically, residues 259-271 are extracellular; the sequence is YCRPSSGNSGDAD. A helical transmembrane segment spans residues 272–292; that stretch reads KVATVFYTVVIPMLNSVIYSL. The Cytoplasmic segment spans residues 293-311; sequence RNKDVKEALRKVMGSKIHS.

It belongs to the G-protein coupled receptor 1 family.

Its subcellular location is the cell membrane. Odorant receptor. This chain is Olfactory receptor 5L1 (OR5L1), found in Homo sapiens (Human).